A 416-amino-acid chain; its full sequence is Notoamide biosynthesis cluster protein N' (416 aa).

A signal peptide spans 1–16; that stretch reads MRAALLTLAFTALAAA. N-linked (GlcNAc...) asparagine glycans are attached at residues N119 and N262.

Functionally, part of the gene cluster that mediates the biosynthesis of notoamide, a fungal indole alkaloid that belongs to a family of natural products containing a characteristic bicyclo[2.2.2]diazaoctane core. The first step of notoamide biosynthesis involves coupling of L-proline and L-tryptophan by the bimodular NRPS notE', to produce cyclo-L-tryptophan-L-proline called brevianamide F. The reverse prenyltransferase notF' then acts as a deoxybrevianamide E synthase and converts brevianamide F to deoxybrevianamide E via reverse prenylation at C-2 of the indole ring leading to the bicyclo[2.2.2]diazaoctane core. Deoxybrevianamide E is further hydroxylated at C-6 of the indole ring, likely catalyzed by the cytochrome P450 monooxygenase notG', to yield 6-hydroxy-deoxybrevianamide E. 6-hydroxy-deoxybrevianamide E is a specific substrate of the prenyltransferase notC' for normal prenylation at C-7 to produce 6-hydroxy-7-prenyl-deoxybrevianamide, also called notoamide S. As the proposed pivotal branching point in notoamide biosynthesis, notoamide S can be diverted to notoamide E through an oxidative pyran ring closure putatively catalyzed by either notH' cytochrome P450 monooxygenase or the notD' FAD-linked oxidoreductase. This step would be followed by an indole 2,3-epoxidation-initiated pinacol-like rearrangement catalyzed by the notB' FAD-dependent monooxygenase leading to the formation of notoamide C and notoamide D. On the other hand notoamide S is converted to notoamide T by notH' (or notD'), a bifunctional oxidase that also functions as the intramolecular Diels-Alderase responsible for generation of (-)-notoamide T. To generate antipodal (+)-notoaminide T, notH (or notD) in Aspergillus strain MF297-2 is expected to catalyze a Diels-Alder reaction leading to the opposite stereochemistry. The remaining oxidoreductase notD' (or notH') likely catalyzes the oxidative pyran ring formation to yield (-)-stephacidin A. The FAD-dependent monooxygenase notI' is highly similar to notB' and is predicted to catalyze a similar conversion from (-)-stephacidin A to (+)-notoamide B via the 2,3-epoxidation of (-)-stephacidin A followed by a pinacol-type rearrangement. Finally, it remains unclear which enzyme could be responsible for the final hydroxylation steps leading to notoamide A and sclerotiamide. The function of notN' in the notoamide biosynthesis has not been determined yet. The chain is Notoamide biosynthesis cluster protein N' from Aspergillus versicolor.